The primary structure comprises 429 residues: Glutamate-1-semialdehyde 2,1-aminomutase 2 (429 aa).

Lys268 is modified (N6-(pyridoxal phosphate)lysine).

It belongs to the class-III pyridoxal-phosphate-dependent aminotransferase family. HemL subfamily. Homodimer. Pyridoxal 5'-phosphate serves as cofactor.

The protein resides in the cytoplasm. It carries out the reaction (S)-4-amino-5-oxopentanoate = 5-aminolevulinate. It participates in porphyrin-containing compound metabolism; protoporphyrin-IX biosynthesis; 5-aminolevulinate from L-glutamyl-tRNA(Glu): step 2/2. This is Glutamate-1-semialdehyde 2,1-aminomutase 2 from Staphylococcus carnosus (strain TM300).